Reading from the N-terminus, the 276-residue chain is Large ribosomal subunit protein uL2c (276 aa).

Residues 225-276 are disordered; that stretch reads AMNPVDHPHGGGEGRTPIGRKKPVTPWGYSALGKKSRKRNRYSDASILRRRE.

The protein belongs to the universal ribosomal protein uL2 family. Part of the 50S ribosomal subunit.

It is found in the plastid. Its subcellular location is the chloroplast. This chain is Large ribosomal subunit protein uL2c (rpl2), found in Pinus koraiensis (Korean pine).